The primary structure comprises 202 residues: Dephospho-CoA kinase (202 aa).

The DPCK domain occupies 4-201 (VIGLTGGIAS…QKYLAMSKQN (198 aa)). Position 12–17 (12–17 (ASGKTT)) interacts with ATP.

The protein belongs to the CoaE family.

It localises to the cytoplasm. It catalyses the reaction 3'-dephospho-CoA + ATP = ADP + CoA + H(+). It participates in cofactor biosynthesis; coenzyme A biosynthesis; CoA from (R)-pantothenate: step 5/5. Functionally, catalyzes the phosphorylation of the 3'-hydroxyl group of dephosphocoenzyme A to form coenzyme A. This Vibrio vulnificus (strain YJ016) protein is Dephospho-CoA kinase.